Here is a 217-residue protein sequence, read N- to C-terminus: Adenylate kinase (217 aa).

Residue 10–15 participates in ATP binding; that stretch reads GAGKGT. The NMP stretch occupies residues 30–59; the sequence is STGDMLRAAVKAGTPLGLQAKDIMASGGLV. Residues threonine 31, arginine 36, 57–59, 85–88, and glutamine 92 contribute to the AMP site; these read GLV and GFPR. Positions 122–159 are LID; it reads GRRVHEASGRVYHIIHNAPRVEGHDDVTGEPLVQRPDD. Residues arginine 123 and 132-133 each bind ATP; that span reads VY. Residues arginine 156 and arginine 167 each contribute to the AMP site. ATP is bound at residue glycine 203.

The protein belongs to the adenylate kinase family. As to quaternary structure, monomer.

Its subcellular location is the cytoplasm. The enzyme catalyses AMP + ATP = 2 ADP. It participates in purine metabolism; AMP biosynthesis via salvage pathway; AMP from ADP: step 1/1. Catalyzes the reversible transfer of the terminal phosphate group between ATP and AMP. Plays an important role in cellular energy homeostasis and in adenine nucleotide metabolism. This is Adenylate kinase from Cellvibrio japonicus (strain Ueda107) (Pseudomonas fluorescens subsp. cellulosa).